The primary structure comprises 247 residues: MSVTMREMLEAGCHFGHQTRFWNPKMAPFIFGHRNKIHIINLEKTLPMFQDAMKYVRQLAANRGTILFVGTKRQSREILAEEAGRAGMPYVDARWLGGMLTNFKTVKTSIKRLKDMEAAKEAGALETMSKKEALMFEREMIKLEKSIGGIKEMGGVPDAIFVVDVGYHKIAVTEANKLGIPVIGVVDTNHSPEGIDYVIPGNDDSSKAVALYVRGVADAILEGRANAVQEVVEAARGDDEFVEVQEG.

This sequence belongs to the universal ribosomal protein uS2 family.

The polypeptide is Small ribosomal subunit protein uS2 (Cupriavidus taiwanensis (strain DSM 17343 / BCRC 17206 / CCUG 44338 / CIP 107171 / LMG 19424 / R1) (Ralstonia taiwanensis (strain LMG 19424))).